We begin with the raw amino-acid sequence, 480 residues long: ATP synthase subunit beta (480 aa).

Residue 154–161 (GGAGVGKT) coordinates ATP.

It belongs to the ATPase alpha/beta chains family. F-type ATPases have 2 components, CF(1) - the catalytic core - and CF(0) - the membrane proton channel. CF(1) has five subunits: alpha(3), beta(3), gamma(1), delta(1), epsilon(1). CF(0) has four main subunits: a(1), b(1), b'(1) and c(9-12).

It is found in the cell inner membrane. It catalyses the reaction ATP + H2O + 4 H(+)(in) = ADP + phosphate + 5 H(+)(out). Its function is as follows. Produces ATP from ADP in the presence of a proton gradient across the membrane. The catalytic sites are hosted primarily by the beta subunits. The polypeptide is ATP synthase subunit beta (Bradyrhizobium sp. (strain ORS 278)).